A 165-amino-acid polypeptide reads, in one-letter code: Large ribosomal subunit protein uL11 (165 aa).

Belongs to the universal ribosomal protein uL11 family.

Its function is as follows. Binds directly to 26S ribosomal RNA. The chain is Large ribosomal subunit protein uL11 (rpl-12) from Caenorhabditis briggsae.